The sequence spans 298 residues: tRNA dimethylallyltransferase (298 aa).

16-23 (GPTASGKS) lines the ATP pocket. Residue 18-23 (TASGKS) coordinates substrate. Interaction with substrate tRNA stretches follow at residues 41–44 (DSMQ) and 165–169 (QRIVR).

Belongs to the IPP transferase family. Monomer. It depends on Mg(2+) as a cofactor.

The enzyme catalyses adenosine(37) in tRNA + dimethylallyl diphosphate = N(6)-dimethylallyladenosine(37) in tRNA + diphosphate. Its function is as follows. Catalyzes the transfer of a dimethylallyl group onto the adenine at position 37 in tRNAs that read codons beginning with uridine, leading to the formation of N6-(dimethylallyl)adenosine (i(6)A). The sequence is that of tRNA dimethylallyltransferase from Rhizobium radiobacter (Agrobacterium tumefaciens).